A 1601-amino-acid polypeptide reads, in one-letter code: PH and SEC7 domain-containing protein (1601 aa).

Residues 1–340 are mediates regulation of axon branching and microtubule organization; the sequence is MSEELKVVLR…TGDLILNLSR (340 aa). The PDZ domain maps to 6–88; it reads KVVLRRSEQH…LVTLELKRDP (83 aa). Disordered regions lie at residues 113-192, 211-322, 339-440, 459-657, 737-780, 872-965, and 1040-1126; these read NIYD…SSTK, TSPT…PAKA, SRTP…SLTN, LEED…SSSG, NSSL…SETA, QQQQ…LLSC, and QQLK…SDVE. Over residues 118–128 the composition is skewed to polar residues; it reads HSSSTNSSPNH. Residues 166–191 show a composition bias toward low complexity; that stretch reads ASGSTTTTTTATHTHSHSRNSSASST. Polar residues predominate over residues 283–297; that stretch reads QSLQHSNSYSGSPVT. Over residues 300–311 the composition is skewed to basic and acidic residues; the sequence is RFADREPEREPE. The Microtubule elimination domain (MTED); Binds tubulin and blocks microtubule polymerization motif lies at 323–340; sequence PRFEAYMMTGDLILNLSR. Residues 339–348 show a composition bias toward polar residues; it reads SRTPQTSNPL. Basic and acidic residues predominate over residues 353-362; that stretch reads KKIDSLRDSP. 3 stretches are compositionally biased toward low complexity: residues 382 to 399, 409 to 424, and 468 to 487; these read SSPT…TSSD, QKQQ…QQQQ, and QRQQ…YEYY. The span at 488 to 505 shows a compositional bias: acidic residues; that stretch reads QNEDELEEQEEVEEEREE. Polar residues predominate over residues 510–519; it reads YDITNIETYQ. Acidic residues predominate over residues 526–557; the sequence is DDDDSDRQCLVDDDDDDDAYDDEENDAGDEDY. 2 stretches are compositionally biased toward polar residues: residues 558–567 and 617–630; these read STNSLGSGSA and TSFS…SLST. The segment covering 640–657 has biased composition (low complexity); sequence SVPTSPEPSSLVPESSSG. A compositionally biased stretch (polar residues) spans 737–747; the sequence is NSSLASNNNEG. 4 stretches are compositionally biased toward low complexity: residues 752–780, 872–942, 949–965, and 1040–1052; these read NRSS…SETA, QQQQ…QQQQ, GGQV…LLSC, and QQLK…QQQQ. Residues 894-1601 form a mediates association to the membrane and rescricts the microtubule-inhibiting activity to the cell cortex region; sequence SSSPQHSAVG…PTNRKEKKKK (708 aa). The span at 1053-1071 shows a compositional bias: basic and acidic residues; that stretch reads QRERERDRDRDREQSEHKV. The region spanning 1125–1291 is the SEC7 domain; it reads VESLHSYHYS…KSLYQAIKTK (167 aa). The PH domain occupies 1332–1445; sequence VEYKKGYVMR…WVETINYVCA (114 aa). The disordered stretch occupies residues 1544–1601; that stretch reads LELQAQQPSPASHEEEADTFPVGTTACTPPTPQSINQKDQQKEQQQQQPTNRKEKKKK. The span at 1568 to 1579 shows a compositional bias: polar residues; that stretch reads TACTPPTPQSIN.

It belongs to the PSD family. As to quaternary structure, interacts (via MTED motif) with tubulin. As to expression, expressed in the head (at protein level).

The protein resides in the cell projection. It is found in the axon. It localises to the cytoplasm. Its subcellular location is the cell membrane. The protein localises to the cell cortex. In terms of biological role, guanine nucleotide exchange factor for Arf6. Regulates axon growth and branching by inhibiting microtubule polymerisation at the cortex. Together with shot, promotes axonal microtubule bundle integrity. Required for normal ethanol-induced tolerance and preference. Probably by activating Arf6, counteracts ethanol-induced sedation. In Drosophila melanogaster (Fruit fly), this protein is PH and SEC7 domain-containing protein.